Here is a 104-residue protein sequence, read N- to C-terminus: Nucleoid-associated protein Amuc_1227 (104 aa).

Belongs to the YbaB/EbfC family. As to quaternary structure, homodimer.

The protein resides in the cytoplasm. It localises to the nucleoid. In terms of biological role, binds to DNA and alters its conformation. May be involved in regulation of gene expression, nucleoid organization and DNA protection. The sequence is that of Nucleoid-associated protein Amuc_1227 from Akkermansia muciniphila (strain ATCC BAA-835 / DSM 22959 / JCM 33894 / BCRC 81048 / CCUG 64013 / CIP 107961 / Muc).